A 209-amino-acid polypeptide reads, in one-letter code: Transmembrane protein 52 (209 aa).

The N-terminal stretch at 1 to 32 (MARGPLAARGLRLLLPLLPLLPLLPLPQVALG) is a signal peptide. Residues 56–76 (VGLILLAVLLLLLCGVTAGCV) traverse the membrane as a helical segment. Residues 145–209 (AYSLYTPEPP…QLPPCSPGAP (65 aa)) are disordered. Basic and acidic residues predominate over residues 159–170 (EAVKMAKPREEG). A compositionally biased stretch (polar residues) spans 186–202 (LETTPVPQESGPNTQLP).

The protein resides in the membrane. The polypeptide is Transmembrane protein 52 (TMEM52) (Homo sapiens (Human)).